The following is a 1073-amino-acid chain: Carbamoyl phosphate synthase large chain (1073 aa).

Positions 2–403 (PKRTDIKSIL…SLQKALRGLE (402 aa)) are carboxyphosphate synthetic domain. Positions 129, 169, 175, 176, 208, 210, 215, 241, 242, 243, 285, and 299 each coordinate ATP. The ATP-grasp 1 domain occupies 133–328 (DVAMKKIGLE…IAKVAAKLAV (196 aa)). Gln-285, Glu-299, and Asn-301 together coordinate Mg(2+). Mn(2+) contacts are provided by Gln-285, Glu-299, and Asn-301. The tract at residues 404-553 (VGATGFDPKV…YSTYEEECEA (150 aa)) is oligomerization domain. A carbamoyl phosphate synthetic domain region spans residues 554–936 (NPSTDREKIM…AFAKAQLGSN (383 aa)). The region spanning 679–870 (QHAVERLKLK…LAKVAARVMA (192 aa)) is the ATP-grasp 2 domain. Residues Arg-715, His-754, Leu-756, Glu-761, Gly-786, Val-787, His-788, Ser-789, Gln-829, and Glu-841 each coordinate ATP. Mg(2+) is bound by residues Gln-829, Glu-841, and Asn-843. Mn(2+) contacts are provided by Gln-829, Glu-841, and Asn-843. An MGS-like domain is found at 937-1073 (STMKKHGRAL…SVQEMHAQIK (137 aa)). An allosteric domain region spans residues 937 to 1073 (STMKKHGRAL…SVQEMHAQIK (137 aa)).

This sequence belongs to the CarB family. Composed of two chains; the small (or glutamine) chain promotes the hydrolysis of glutamine to ammonia, which is used by the large (or ammonia) chain to synthesize carbamoyl phosphate. Tetramer of heterodimers (alpha,beta)4. The cofactor is Mg(2+). It depends on Mn(2+) as a cofactor.

The catalysed reaction is hydrogencarbonate + L-glutamine + 2 ATP + H2O = carbamoyl phosphate + L-glutamate + 2 ADP + phosphate + 2 H(+). It carries out the reaction hydrogencarbonate + NH4(+) + 2 ATP = carbamoyl phosphate + 2 ADP + phosphate + 2 H(+). Its pathway is amino-acid biosynthesis; L-arginine biosynthesis; carbamoyl phosphate from bicarbonate: step 1/1. The protein operates within pyrimidine metabolism; UMP biosynthesis via de novo pathway; (S)-dihydroorotate from bicarbonate: step 1/3. Large subunit of the glutamine-dependent carbamoyl phosphate synthetase (CPSase). CPSase catalyzes the formation of carbamoyl phosphate from the ammonia moiety of glutamine, carbonate, and phosphate donated by ATP, constituting the first step of 2 biosynthetic pathways, one leading to arginine and/or urea and the other to pyrimidine nucleotides. The large subunit (synthetase) binds the substrates ammonia (free or transferred from glutamine from the small subunit), hydrogencarbonate and ATP and carries out an ATP-coupled ligase reaction, activating hydrogencarbonate by forming carboxy phosphate which reacts with ammonia to form carbamoyl phosphate. The chain is Carbamoyl phosphate synthase large chain from Escherichia coli O6:H1 (strain CFT073 / ATCC 700928 / UPEC).